A 346-amino-acid polypeptide reads, in one-letter code: Selenocysteine Se-methyltransferase (346 aa).

The region spanning 13-330 is the Hcy-binding domain; that stretch reads SMKELLKETG…TTIRAIHKRL (318 aa). Residues Cys-248, Cys-315, and Cys-316 each contribute to the Zn(2+) site.

Zn(2+) is required as a cofactor. As to expression, expressed in roots, young leaves and florets, but not detected in plants not exposed to selenium.

It carries out the reaction S-methyl-L-methionine + L-selenocysteine = Se-methyl-L-selenocysteine + L-methionine + H(+). Inhibited by L-methionine. Catalyzes the methylation of DL- and L-selenocysteine with S-methylmethionine as donor. Also methylates DL-homocysteine, DL- and L-cysteine in vitro. May be involved in selenium detoxification. The chain is Selenocysteine Se-methyltransferase (SMT) from Brassica oleracea var. italica (Broccoli).